The following is a 525-amino-acid chain: Adenosine deaminase AGSA (525 aa).

An N-terminal signal peptide occupies residues 1–25 (MSSFSTHNFVAIATFVCWFCCLATA). The N-linked (GlcNAc...) asparagine glycan is linked to Asn81. Residues His117 and His119 each coordinate Zn(2+). Substrate is bound at residue Asp120. A glycan (N-linked (GlcNAc...) asparagine) is linked at Asn132. A disulfide bridge connects residues Cys142 and Cys163. N-linked (GlcNAc...) asparagine glycosylation occurs at Asn188. Residues 207–214 (WVRFNKYF) and Gly329 each bind substrate. Asn334 carries N-linked (GlcNAc...) asparagine glycosylation. His361 provides a ligand contact to Zn(2+). Residue Glu364 is the Proton donor of the active site. The Proton acceptor role is filled by His389. Zn(2+) is bound at residue Asp446. Asp447 provides a ligand contact to substrate.

This sequence belongs to the metallo-dependent hydrolases superfamily. Adenosine and AMP deaminases family. ADGF subfamily. Requires Zn(2+) as cofactor. Detected in egg cordons and in the developing central nervous system. Not detected in adult central nervous system (at protein level). Atrial gland.

The protein resides in the secreted. The catalysed reaction is adenosine + H2O + H(+) = inosine + NH4(+). Its function is as follows. Adenosine deaminase that may contribute to the degradation of extracellular adenosine, a signaling molecule that controls a variety of cellular responses. May play a role in the regulation of cell proliferation. The sequence is that of Adenosine deaminase AGSA from Aplysia californica (California sea hare).